The following is a 1488-amino-acid chain: DNA polymerase alpha catalytic subunit (1488 aa).

Disordered stretches follow at residues 1 to 22 (MSESPSEPRAKRQRVDKNGRFA), 79 to 124 (LRDF…TGKA), and 236 to 325 (FFSS…ESED). Over residues 83 to 93 (FEDEDEYSDGE) the composition is skewed to acidic residues. Positions 96–103 (RKDSKKKK) match the Nuclear localization signal motif. The segment covering 99–113 (SKKKKGVAPNSKKRP) has biased composition (basic residues). Ser239 is modified (phosphoserine). Over residues 242–258 (IKKEPMPEKTPAKKATE) the composition is skewed to basic and acidic residues. Positions 260–278 (PFSDNEMDFSCLDDDENQF) are enriched in acidic residues. 2 positions are modified to phosphoserine: Ser262 and Ser269. Residues 286 to 303 (TEKVSQTKTAAEKTSQSK) show a composition bias toward polar residues. A compositionally biased stretch (basic and acidic residues) spans 304–325 (VAEKSAPKKETTGSPKESESED). Thr314 is subject to Phosphothreonine. Ser317 is modified (phosphoserine). Residues 638–758 (DSERALLSWF…DLLEMYEKGE (121 aa)) form a contains conserved residues essential for 3' -&gt; 5' exonuclease activities region. 2 DNA-binding regions span residues 675 to 734 (QIVA…CKQV) and 1255 to 1380 (PTKF…RKKS). Residues Cys1296, Cys1299, Cys1324, Cys1329, Cys1362, Cys1367, Cys1385, and Cys1388 each contribute to the Zn(2+) site. The CysA-type zinc finger occupies 1296–1327 (CVTCKTEQLMASAYRPGPSNSHIAVLQQCAKS). The CysB motif signature appears at 1362–1388 (CDHPDCNFNTRTHSLRKKSHRPLCQKC).

This sequence belongs to the DNA polymerase type-B family. As to quaternary structure, component of the alpha DNA polymerase complex (also known as the alpha DNA polymerase-primase complex) consisting of four subunits: the catalytic subunit PolA1, the regulatory subunit PolA2, and the primase complex subunits Prim1 and Prim2 respectively. PolA1 associates with the DNA primase complex before association with PolA2. Interacts with Dpit47; the interaction inhibits the activity of the DNA polymerase and occurs only in proliferating cells but not in quiescent cells. Post-translationally, in embryos, a cleaved form of 130 kDa is produced up to cycle 14 and then disappears. Expressed in embryos (at protein level).

The protein resides in the nucleus. The enzyme catalyses DNA(n) + a 2'-deoxyribonucleoside 5'-triphosphate = DNA(n+1) + diphosphate. Inhibited by N2-(p-n-butylphenyl) deoxyguanosine 5'-triphosphate and N2-(p-n-butylphenyl) deoxyadenosine 5'-triphosphate. DNA synthesis is not inhibited by fungal toxin alpha-amaitin. The 3'-5' exonuclease activity is inhibited by 10mM dGMP. Its function is as follows. Catalytic subunit of the DNA polymerase alpha complex (also known as the alpha DNA polymerase-primase complex) which plays an essential role in the initiation of DNA synthesis. During the S phase of the cell cycle, the DNA polymerase alpha complex (composed of a catalytic subunit PolA1, an accessory subunit PolA2 and two primase subunits, the catalytic subunit Prim1 and the regulatory subunit Prim2) is recruited to DNA at the replicative forks. The primase subunit of the polymerase alpha complex initiates DNA synthesis by oligomerising short RNA primers on both leading and lagging strands. These primers are initially extended by the polymerase alpha catalytic subunit and subsequently transferred to polymerase delta and polymerase epsilon for processive synthesis on the lagging and leading strand, respectively. In addition to polymerase activity, exhibits 3' to 5' exonuclease activity. This Drosophila melanogaster (Fruit fly) protein is DNA polymerase alpha catalytic subunit.